A 1342-amino-acid chain; its full sequence is DNA-directed RNA polymerase subunit beta (1342 aa).

Belongs to the RNA polymerase beta chain family. The RNAP catalytic core consists of 2 alpha, 1 beta, 1 beta' and 1 omega subunit. When a sigma factor is associated with the core the holoenzyme is formed, which can initiate transcription.

It catalyses the reaction RNA(n) + a ribonucleoside 5'-triphosphate = RNA(n+1) + diphosphate. In terms of biological role, DNA-dependent RNA polymerase catalyzes the transcription of DNA into RNA using the four ribonucleoside triphosphates as substrates. This chain is DNA-directed RNA polymerase subunit beta, found in Erwinia tasmaniensis (strain DSM 17950 / CFBP 7177 / CIP 109463 / NCPPB 4357 / Et1/99).